We begin with the raw amino-acid sequence, 451 residues long: Probable carboxypeptidase PMAA_093910 (451 aa).

The first 19 residues, 1 to 19, serve as a signal peptide directing secretion; sequence MKVSSLLPSVLLLVGATRA. An N-linked (GlcNAc...) asparagine glycan is attached at N149. D171 provides a ligand contact to Zn(2+). The active-site Proton acceptor is E203. E204 serves as a coordination point for Zn(2+). N-linked (GlcNAc...) asparagine glycosylation is present at N354.

This sequence belongs to the peptidase M20A family. Zn(2+) is required as a cofactor.

Its subcellular location is the secreted. In Talaromyces marneffei (strain ATCC 18224 / CBS 334.59 / QM 7333) (Penicillium marneffei), this protein is Probable carboxypeptidase PMAA_093910.